We begin with the raw amino-acid sequence, 103 residues long: UPF0145 protein CYB_1351 (103 aa).

The protein belongs to the UPF0145 family.

The chain is UPF0145 protein CYB_1351 from Synechococcus sp. (strain JA-2-3B'a(2-13)) (Cyanobacteria bacterium Yellowstone B-Prime).